Reading from the N-terminus, the 1624-residue chain is ATP-binding cassette sub-family A member 6 (1624 aa).

A helical transmembrane segment spans residues 31–51; sequence LLEWSIPIIIGLHMGLFSYLA. N-linked (GlcNAc...) asparagine glycans are attached at residues Asn-84 and Asn-91. 6 helical membrane-spanning segments follow: residues 222 to 242, 267 to 287, 297 to 317, 326 to 346, 356 to 376, and 395 to 415; these read IFIL…SSNV, WGLI…IIIT, FLVI…VTFL, VLTN…GFTV, EWVL…KVIF, and VMIA…VLAL. Residues 478 to 713 form the ABC transporter 1 domain; sequence IRIRNIKKEY…WGLGYHLSLF (236 aa). 514–521 lines the ATP pocket; that stretch reads GHSGAGKS. Asn-576 carries N-linked (GlcNAc...) asparagine glycosylation. The next 8 helical transmembrane spans lie at 854-874, 971-991, 1005-1025, 1058-1078, 1094-1114, 1130-1150, 1154-1174, and 1194-1214; these read AFLI…IEYV, LHCF…MLNH, FIVL…CVIC, WCGQ…TSYF, IVFS…FLTY, WSIC…NGPF, LVIS…LVVL, and AVDL…IFVL. In terms of domain architecture, ABC transporter 2 spans 1282–1520; that stretch reads LHKEYAGQKK…FGQDYVLELR (239 aa). 1320–1327 provides a ligand contact to ATP; the sequence is GPDGAGKS.

This sequence belongs to the ABC transporter superfamily. ABCA family. In terms of tissue distribution, widely expressed with higher expression in heart, lung, brain, spleen and testis.

The protein localises to the golgi apparatus membrane. Its function is as follows. Probable transporter which may play a role in macrophage lipid transport and homeostasis. The protein is ATP-binding cassette sub-family A member 6 (Abca6) of Mus musculus (Mouse).